A 90-amino-acid polypeptide reads, in one-letter code: UPF0367 protein Ava_2513 (90 aa).

The protein belongs to the UPF0367 family.

This Trichormus variabilis (strain ATCC 29413 / PCC 7937) (Anabaena variabilis) protein is UPF0367 protein Ava_2513.